The primary structure comprises 130 residues: Ribosome-binding factor A (130 aa).

It belongs to the RbfA family. In terms of assembly, monomer. Binds 30S ribosomal subunits, but not 50S ribosomal subunits or 70S ribosomes.

The protein localises to the cytoplasm. Functionally, one of several proteins that assist in the late maturation steps of the functional core of the 30S ribosomal subunit. Associates with free 30S ribosomal subunits (but not with 30S subunits that are part of 70S ribosomes or polysomes). Required for efficient processing of 16S rRNA. May interact with the 5'-terminal helix region of 16S rRNA. The polypeptide is Ribosome-binding factor A (Flavobacterium johnsoniae (strain ATCC 17061 / DSM 2064 / JCM 8514 / BCRC 14874 / CCUG 350202 / NBRC 14942 / NCIMB 11054 / UW101) (Cytophaga johnsonae)).